Reading from the N-terminus, the 488-residue chain is Protein nucleotidyltransferase YdiU (488 aa).

The ATP site is built by G91, G93, R94, K114, D126, G127, R177, and R184. D253 serves as the catalytic Proton acceptor. Positions 254 and 263 each coordinate Mg(2+). Residue D263 participates in ATP binding.

The protein belongs to the SELO family. It depends on Mg(2+) as a cofactor. The cofactor is Mn(2+).

It catalyses the reaction L-seryl-[protein] + ATP = 3-O-(5'-adenylyl)-L-seryl-[protein] + diphosphate. The enzyme catalyses L-threonyl-[protein] + ATP = 3-O-(5'-adenylyl)-L-threonyl-[protein] + diphosphate. It carries out the reaction L-tyrosyl-[protein] + ATP = O-(5'-adenylyl)-L-tyrosyl-[protein] + diphosphate. The catalysed reaction is L-histidyl-[protein] + UTP = N(tele)-(5'-uridylyl)-L-histidyl-[protein] + diphosphate. It catalyses the reaction L-seryl-[protein] + UTP = O-(5'-uridylyl)-L-seryl-[protein] + diphosphate. The enzyme catalyses L-tyrosyl-[protein] + UTP = O-(5'-uridylyl)-L-tyrosyl-[protein] + diphosphate. Functionally, nucleotidyltransferase involved in the post-translational modification of proteins. It can catalyze the addition of adenosine monophosphate (AMP) or uridine monophosphate (UMP) to a protein, resulting in modifications known as AMPylation and UMPylation. The chain is Protein nucleotidyltransferase YdiU from Bacillus cereus (strain AH187).